An 800-amino-acid polypeptide reads, in one-letter code: MMHSSSVRRMITVKWSLCLIFCLTNSILVSAKHLCLPDQKDSLWGFKNEFNVPSPHSYAMTEKWRNNTDCCSWDGVSCDPKTGVVVELDLQYSHLNGPLRSNSSLFRLQHLQKLVLGSNHLSGILPDSIGNLKRLKVLVLVNCNLFGKIPSSLGNLSYLTHLDLSYNDFTSEGPDSMGNLNRLTDMLLKLSSVTWIDLGDNQLKGMLPSNMSSLSKLEAFDISGNSFSGTIPSSLFMIPSLILLHLGRNDFSGPFEIGNISSPSNLQLLNIGRNNFNPDIVDLSIFSPLLSLGYLDVSGINLKISSTVSLPSPIEYLGLLSCNISEFPKFLRNQTSLEYLDISANQIEGQVPEWLWSLPELRYVNISHNSFNGFEGPADVIQGGRELLVLDISSNIFQDPFPLLPVVSMNYLFSSNNRFSGEIPKTICELDNLRILVLSNNNFSGSIPRCFENLHLYVLHLRNNNLSGIFPEEAISHHLQSFDVGHNLFSGELPKSLINCSDIEFLNVEDNRINDTFPSWLELLPNLQILVLRSNEFYGPIFSPGDSLSFSRLRIFDISENRFTGVLPSDYFVGWSVMSSVVDIDGRIIQYTVTGIDRDFYHKSVALINKGLKMELVGSGFTIYKTIDVSGNRLEGDIPESIGLLKEVIVLSMSNNAFTGHIPPSLSNLSNLQSLDLSQNRLSGSIPGELGKLTFLEWMNFSHNRLEGPIPETTQIQTQDSSSFTENPGLCGAPLLKKCGGEEEATKQEQDEDKEEEDQVFSWIAAAIGYVPGVVCGLTIGHILVSHKRDWFMRIVSFFT.

A signal peptide spans 1–31; sequence MMHSSSVRRMITVKWSLCLIFCLTNSILVSA. Over 32–759 the chain is Extracellular; sequence KHLCLPDQKD…QDEDKEEEDQ (728 aa). Asparagine 66 and asparagine 102 each carry an N-linked (GlcNAc...) asparagine glycan. LRR repeat units lie at residues 109-131, 133-156, 157-179, 190-213, 214-238, 240-262, 263-288, 294-311, 312-334, 335-358, 360-383, 385-406, 407-430, 431-453, 455-477, 479-500, 502-523, 524-550, 551-574, 621-645, 646-669, 670-693, and 695-718; these read QHLQ…SIGN, KRLK…LGNL, SYLT…SMGN, LSSV…NMSS, LSKL…LFMI, SLIL…NISS, PSNL…IFSP, YLDV…VSLP, SPIE…LRNQ, TSLE…LWSL, ELRY…VIQG, RELL…LLPV, VSMN…ICEL, DNLR…CFEN, HLYV…AISH, LQSF…LINC, DIEF…WLEL, LPNL…SLSF, SRLR…YFVG, FTIY…IGLL, KEVI…LSNL, SNLQ…LGKL, and FLEW…QIQT. The N-linked (GlcNAc...) asparagine glycan is linked to asparagine 155. Asparagine 210 carries an N-linked (GlcNAc...) asparagine glycan. Asparagine 259 is a glycosylation site (N-linked (GlcNAc...) asparagine). N-linked (GlcNAc...) asparagine glycosylation is found at asparagine 323 and asparagine 333. An N-linked (GlcNAc...) asparagine glycan is attached at asparagine 365. N-linked (GlcNAc...) asparagine glycosylation is found at asparagine 442, asparagine 465, asparagine 499, and asparagine 514. Asparagine 668 carries an N-linked (GlcNAc...) asparagine glycan. Asparagine 700 carries N-linked (GlcNAc...) asparagine glycosylation. Residues 760–780 traverse the membrane as a helical segment; it reads VFSWIAAAIGYVPGVVCGLTI. Over 781–800 the chain is Cytoplasmic; the sequence is GHILVSHKRDWFMRIVSFFT.

It belongs to the RLP family.

The protein localises to the cell membrane. The sequence is that of Receptor-like protein 47 from Arabidopsis thaliana (Mouse-ear cress).